We begin with the raw amino-acid sequence, 301 residues long: Glycine--tRNA ligase alpha subunit (301 aa).

Belongs to the class-II aminoacyl-tRNA synthetase family. In terms of assembly, tetramer of two alpha and two beta subunits.

It is found in the cytoplasm. It catalyses the reaction tRNA(Gly) + glycine + ATP = glycyl-tRNA(Gly) + AMP + diphosphate. This chain is Glycine--tRNA ligase alpha subunit, found in Shewanella halifaxensis (strain HAW-EB4).